Reading from the N-terminus, the 1899-residue chain is Protein TIC 214 (1899 aa).

Helical transmembrane passes span 23 to 43, 64 to 84, 87 to 107, 124 to 144, 172 to 192, and 217 to 237; these read VVVG…SYLF, FITG…HLAL, PHTI…WNNH, LSIQ…LFIL, VGWL…LVCI, and WTAR…LGVH. Disordered regions lie at residues 256-280 and 1581-1619; these read EQKK…TKKE and PKDY…GLDL. Residues 269–280 show a composition bias toward basic and acidic residues; that stretch reads EKTFETKETKKE.

It belongs to the TIC214 family. Part of the Tic complex.

The protein localises to the plastid. The protein resides in the chloroplast inner membrane. In terms of biological role, involved in protein precursor import into chloroplasts. May be part of an intermediate translocation complex acting as a protein-conducting channel at the inner envelope. This chain is Protein TIC 214, found in Ceratophyllum demersum (Rigid hornwort).